Consider the following 285-residue polypeptide: MPVVTMRQLLDSGVHFGHQTRRWNPKMKRFIFTERNGIYIIDLQQSLSYIDRAYEFVKETVAHGGTILFVGTKKQAQEAIAEQAGRVGMPYVNHRWLGGMLTNFSTVSKRVQRMKELEEIDFEDVAGSQFTKKELLLLNRELEKLQANLGGIRNMAKTPSAVWVVDTKKEHLAVDEAQKLGIPVVAILDTNCDPDEVAYPIPGNDDAIRSVNLLTRVVADAVAEGLIARQGGKSGQAAAEPMAEWERELLEQHNAQQAEQAEAPAAEAPAEPAEAPAAEAAPQGE.

A disordered region spans residues 231–285; it reads GGKSGQAAAEPMAEWERELLEQHNAQQAEQAEAPAAEAPAEPAEAPAAEAAPQGE. Residues 255-285 are compositionally biased toward low complexity; it reads AQQAEQAEAPAAEAPAEPAEAPAAEAAPQGE.

This sequence belongs to the universal ribosomal protein uS2 family.

This is Small ribosomal subunit protein uS2 from Micrococcus luteus (strain ATCC 4698 / DSM 20030 / JCM 1464 / CCM 169 / CCUG 5858 / IAM 1056 / NBRC 3333 / NCIMB 9278 / NCTC 2665 / VKM Ac-2230) (Micrococcus lysodeikticus).